A 98-amino-acid polypeptide reads, in one-letter code: MPIIYMNIMLAFLISLLGMLFYRSHLMSSLLCLEGMMLSLFIMSTLMALNMHFPLANIVPIALLVFAACEAAVGLALLVSISNTYGLDYIHNLNLLQC.

3 helical membrane passes run M1–F21, S29–L49, and I58–L78.

It belongs to the complex I subunit 4L family. Core subunit of respiratory chain NADH dehydrogenase (Complex I) which is composed of 45 different subunits.

It localises to the mitochondrion inner membrane. It catalyses the reaction a ubiquinone + NADH + 5 H(+)(in) = a ubiquinol + NAD(+) + 4 H(+)(out). Its function is as follows. Core subunit of the mitochondrial membrane respiratory chain NADH dehydrogenase (Complex I) which catalyzes electron transfer from NADH through the respiratory chain, using ubiquinone as an electron acceptor. Part of the enzyme membrane arm which is embedded in the lipid bilayer and involved in proton translocation. In Trachypithecus obscurus (Dusky leaf-monkey), this protein is NADH-ubiquinone oxidoreductase chain 4L (MT-ND4L).